Here is a 2211-residue protein sequence, read N- to C-terminus: Nonribosomal peptide synthetase 13 (2211 aa).

The interval 76–475 (TYAELDSLSD…IEHHLQLTLP (400 aa)) is adenylation 1. Positions 594 to 671 (PPSTPKEATI…EQSKRAGLIQ (78 aa)) constitute a Carrier 1 domain. Position 631 is an O-(pantetheine 4'-phosphoryl)serine (Ser631). The interval 710 to 975 (EDIYPCTALQ…IATVPTRIRV (266 aa)) is condensation 1. An adenylation 2 region spans residues 1169 to 1563 (TYRELWAHSS…LGAVEASVMR (395 aa)). Positions 1677–1756 (PMSDDNERRL…RSRHLITEQA (80 aa)) constitute a Carrier 2 domain. Residue Ser1714 is modified to O-(pantetheine 4'-phosphoryl)serine. The segment at 1814–2069 (HFQFDLSGAV…CTNYIPYRLS (256 aa)) is condensation 2.

This sequence belongs to the NRP synthetase family.

The enzyme catalyses L-proline + L-tryptophan + 2 ATP = brevianamide F + 2 AMP + 2 diphosphate + 2 H(+). It functions in the pathway mycotoxin biosynthesis. Its function is as follows. Nonribosomal peptide synthetase; part of the gene cluster that mediates the biosynthesis of fumitremorgins, indole alkaloids that carry not only intriguing chemical structures, but also interesting biological and pharmacological activities. The biosynthesis of fumitremorgin-type alkaloids begins by condensation of the two amino acids L-tryptophan and L-proline to brevianamide F, catalyzed by the non-ribosomal peptide synthetase ftmA. Brevianamide F is then prenylated by the prenyltransferase ftmPT1/ftmB in the presence of dimethylallyl diphosphate, resulting in the formation of tryprostatin B. The three cytochrome P450 monooxygenases, ftmP450-1/ftmC, ftmP450-2/ftmE and ftmP450-3/FtmG, are responsible for the conversion of tryprostatin B to 6-hydroxytryprostatin B, tryprostatin A to fumitremorgin C and fumitremorgin C to 12,13-dihydroxyfumitremorgin C, respectively. The putative methyltransferase ftmMT/ftmD is expected for the conversion of 6-hydroxytryprostatin B to tryprostatin A. FtmPT2/FtmH catalyzes the prenylation of 12,13-dihydroxyfumitre-morgin C in the presence of dimethylallyl diphosphate, resulting in the formation of fumitremorgin B. Fumitremorgin B is further converted to verruculogen by ftmOx1/ftmF via the insertion of an endoperoxide bond between the two prenyl moieties. In some fungal species, verruculogen is further converted to fumitremorgin A, but the enzymes involved in this step have not been identified yet. The protein is Nonribosomal peptide synthetase 13 of Aspergillus fumigatus (strain ATCC MYA-4609 / CBS 101355 / FGSC A1100 / Af293) (Neosartorya fumigata).